The primary structure comprises 149 residues: MGISVKDVSSHEFTRAFAAFLKKSGKMKVPEWTDFVKTGMFKELSPYEPDWYFIRAASICRHLYIRSPAGIGSFEKIYGGRRRRGTAPSHFCKANGSISRRLLQSLEGLKIVEKDPNGGRRLTSQGRRDLDRIAAQIAPKRAPSAPKTV.

Belongs to the eukaryotic ribosomal protein eS19 family.

The chain is Small ribosomal subunit protein eS19 (RPS19) from Mya arenaria (Soft-shell clam).